A 414-amino-acid polypeptide reads, in one-letter code: Adenylosuccinate synthetase (414 aa).

GTP-binding positions include 12-18 (GDEGKGK) and 40-42 (GHT). Aspartate 13 acts as the Proton acceptor in catalysis. Residues aspartate 13 and glycine 40 each contribute to the Mg(2+) site. IMP-binding positions include 13–16 (DEGK), 38–41 (NAGH), threonine 124, arginine 138, glutamine 216, threonine 231, and arginine 297. The Proton donor role is filled by histidine 41. 293–299 (STTGRPR) is a binding site for substrate. Residues arginine 299, 325-327 (KLD), and 403-405 (STG) contribute to the GTP site.

Belongs to the adenylosuccinate synthetase family. In terms of assembly, homodimer. The cofactor is Mg(2+).

The protein resides in the cytoplasm. It catalyses the reaction IMP + L-aspartate + GTP = N(6)-(1,2-dicarboxyethyl)-AMP + GDP + phosphate + 2 H(+). Its pathway is purine metabolism; AMP biosynthesis via de novo pathway; AMP from IMP: step 1/2. In terms of biological role, plays an important role in the de novo pathway of purine nucleotide biosynthesis. Catalyzes the first committed step in the biosynthesis of AMP from IMP. The protein is Adenylosuccinate synthetase of Hydrogenobaculum sp. (strain Y04AAS1).